A 341-amino-acid chain; its full sequence is Cyclic GMP-AMP synthase (341 aa).

S56 lines the ATP pocket. Catalysis depends on residues D71 and D73. D73 contacts Mg(2+). Residue N109 coordinates ATP. The active site involves D123. Mg(2+) is bound at residue D123. Positions 192 and 238 each coordinate ATP.

This sequence belongs to the CD-NTase family. B04 subfamily. In terms of assembly, monomer. It depends on Mg(2+) as a cofactor.

It catalyses the reaction GTP + ATP = 3',3'-cGAMP + 2 diphosphate. Functionally, cyclic nucleotide synthase (second messenger synthase) of a CBASS antivirus system. CBASS (cyclic oligonucleotide-based antiphage signaling system) provides immunity against bacteriophage. The CD-NTase protein synthesizes cyclic nucleotides in response to infection; these serve as specific second messenger signals. The signals activate a diverse range of effectors, leading to bacterial cell death and thus abortive phage infection. A type II-A(GA) CBASS system. Catalyzes the synthesis of 3'3'-cyclic GMP-AMP (3'3'-cGAMP) from GTP and ATP, a second messenger in cell signal transduction. May make another product. Controls the activity of the CBASS cGAMP-activated phospholipase effector protein. This is Cyclic GMP-AMP synthase from Bacteroides fragilis.